The following is a 660-amino-acid chain: Rhamnogalacturonate lyase B (660 aa).

The first 18 residues, 1–18, serve as a signal peptide directing secretion; that stretch reads MRLGVCFSLAAAASVARA. 4 N-linked (GlcNAc...) asparagine glycosylation sites follow: asparagine 25, asparagine 109, asparagine 142, and asparagine 284. The interval 446–466 is disordered; the sequence is RLGTPDKSSGEFRHGAARDPT. The segment covering 453-466 has biased composition (basic and acidic residues); sequence SSGEFRHGAARDPT. 3 N-linked (GlcNAc...) asparagine glycosylation sites follow: asparagine 524, asparagine 566, and asparagine 635.

This sequence belongs to the polysaccharide lyase 4 family.

The protein localises to the secreted. It carries out the reaction Endotype eliminative cleavage of L-alpha-rhamnopyranosyl-(1-&gt;4)-alpha-D-galactopyranosyluronic acid bonds of rhamnogalacturonan I domains in ramified hairy regions of pectin leaving L-rhamnopyranose at the reducing end and 4-deoxy-4,5-unsaturated D-galactopyranosyluronic acid at the non-reducing end.. Pectinolytic enzymes consist of four classes of enzymes: pectin lyase, polygalacturonase, pectin methylesterase and rhamnogalacturonase. Degrades the rhamnogalacturonan I (RG-I) backbone of pectin. Active against linseed rhamnogalacturonan. This is Rhamnogalacturonate lyase B (rglB) from Emericella nidulans (strain FGSC A4 / ATCC 38163 / CBS 112.46 / NRRL 194 / M139) (Aspergillus nidulans).